Consider the following 212-residue polypeptide: Thiamine-phosphate synthase (212 aa).

4-amino-2-methyl-5-(diphosphooxymethyl)pyrimidine-binding positions include 40–44 (QFREK) and Asn-75. Residues Asp-76 and Asp-95 each coordinate Mg(2+). Residue Ser-113 participates in 4-amino-2-methyl-5-(diphosphooxymethyl)pyrimidine binding. Residue 139–141 (TPS) coordinates 2-[(2R,5Z)-2-carboxy-4-methylthiazol-5(2H)-ylidene]ethyl phosphate. A 4-amino-2-methyl-5-(diphosphooxymethyl)pyrimidine-binding site is contributed by Lys-142. Residues Gly-171 and 191-192 (IS) each bind 2-[(2R,5Z)-2-carboxy-4-methylthiazol-5(2H)-ylidene]ethyl phosphate.

The protein belongs to the thiamine-phosphate synthase family. The cofactor is Mg(2+).

It catalyses the reaction 2-[(2R,5Z)-2-carboxy-4-methylthiazol-5(2H)-ylidene]ethyl phosphate + 4-amino-2-methyl-5-(diphosphooxymethyl)pyrimidine + 2 H(+) = thiamine phosphate + CO2 + diphosphate. The catalysed reaction is 2-(2-carboxy-4-methylthiazol-5-yl)ethyl phosphate + 4-amino-2-methyl-5-(diphosphooxymethyl)pyrimidine + 2 H(+) = thiamine phosphate + CO2 + diphosphate. It carries out the reaction 4-methyl-5-(2-phosphooxyethyl)-thiazole + 4-amino-2-methyl-5-(diphosphooxymethyl)pyrimidine + H(+) = thiamine phosphate + diphosphate. It functions in the pathway cofactor biosynthesis; thiamine diphosphate biosynthesis; thiamine phosphate from 4-amino-2-methyl-5-diphosphomethylpyrimidine and 4-methyl-5-(2-phosphoethyl)-thiazole: step 1/1. Condenses 4-methyl-5-(beta-hydroxyethyl)thiazole monophosphate (THZ-P) and 2-methyl-4-amino-5-hydroxymethyl pyrimidine pyrophosphate (HMP-PP) to form thiamine monophosphate (TMP). This chain is Thiamine-phosphate synthase, found in Staphylococcus carnosus (strain TM300).